A 77-amino-acid chain; its full sequence is Neurotoxin LmNaTx21.1 (77 aa).

The N-terminal stretch at 1–7 is a signal peptide; it reads LILVACL. In terms of domain architecture, LCN-type CS-alpha/beta spans 16 to 76; sequence KDGYPVDWNN…VEIKGYGRCR (61 aa). Disulfide bonds link Cys26/Cys75, Cys30/Cys51, Cys37/Cys58, and Cys41/Cys60.

This sequence belongs to the long (4 C-C) scorpion toxin superfamily. Sodium channel inhibitor family. Alpha subfamily. Expressed by the venom gland.

The protein resides in the secreted. Binds voltage-independently at site-3 of voltage-gated sodium channels (Nav) and inhibits the inactivation of the activated channels, thereby blocking neuronal transmission. This is Neurotoxin LmNaTx21.1 from Lychas mucronatus (Chinese swimming scorpion).